A 410-amino-acid chain; its full sequence is Lysosome-associated membrane glycoprotein 2 (410 aa).

The N-terminal stretch at 1–28 is a signal peptide; sequence MVCFRLFPVPGSGLVLVCLVLGAVRSYA. The first lumenal domain stretch occupies residues 29–192; that stretch reads LELNLTDSEN…STNEFLCDKD (164 aa). Topologically, residues 29-375 are lumenal; that stretch reads LELNLTDSEN…QDCSADDDNF (347 aa). N32 and N38 each carry an N-linked (GlcNAc...) (polylactosaminoglycan) asparagine glycan. C41 and C79 form a disulfide bridge. N-linked (GlcNAc...) asparagine glycans are attached at residues N49, N58, N75, N101, N123, and N179. An intrachain disulfide couples C153 to C189. Positions 193-228 are hinge; sequence KTSTVAPTIHTTVPSPTTTPTPKEKPEAGTYSVNNG. The O-linked (GalNAc...) serine glycan is linked to S195. 4 O-linked (GalNAc...) threonine glycosylation sites follow: T196, T200, T203, and T204. The span at 199-213 shows a compositional bias: low complexity; the sequence is PTIHTTVPSPTTTPT. Positions 199-221 are disordered; sequence PTIHTTVPSPTTTPTPKEKPEAG. O-linked (GalNAc...) serine; partial glycosylation occurs at S207. T209 carries O-linked (GalNAc...) threonine; partial glycosylation. O-linked (GalNAc...) threonine glycans are attached at residues T210 and T211. Residue T213 is glycosylated (O-linked (GalNAc...) threonine; partial). Residues N229, N242, N257, N275, and N300 are each glycosylated (N-linked (GlcNAc...) asparagine). Residues 229-375 are second lumenal domain; sequence NDTCLLATMG…QDCSADDDNF (147 aa). A disulfide bond links C232 and C265. N307 is a glycosylation site (N-linked (GlcNAc...) (polylactosaminoglycan) asparagine). 2 N-linked (GlcNAc...) asparagine glycosylation sites follow: N317 and N356. A disulfide bridge links C331 with C368. A helical transmembrane segment spans residues 376–399; the sequence is LVPIAVGAALAGVLILVLLAYFIG. Residues 400–410 are Cytoplasmic-facing; that stretch reads LKHHHAGYEQF. The segment at 401–404 is important for binding and subsequent lysosomal degradation of target proteins; the sequence is KHHH.

Belongs to the LAMP family. Monomer. Homodimer. Homotrimer. Forms large homooligomers. Interacts (via its cytoplasmic region) with HSPA8; HSPA8 mediates recruitment of proteins with a KFERQ motif to the surface of the lysosome for chaperone-mediated autophagy. Interacts with HSP90 in the lysosome lumen; this enhances LAMP2 stability. Interacts with MLLT11. Interacts with ABCB9. Interacts with FURIN. Interacts with CT55; this interaction may be important for LAMP2 protein stability. Interacts with TMEM175; inhibiting the proton channel activity of TMEM175. Forms a ternary complex with RAB7A and RUFY4 (via RUN domain); the interaction with RAB7A is mediated by RUFY4 (via RUN and coiled coil domains). In terms of assembly, (Microbial infection) Interacts with mumps virus protein F; this interaction promotes protein F cleavage by FURIN. In terms of processing, O- and N-glycosylated; some of the 16 N-linked glycans are polylactosaminoglycans. Isoform LAMP-2A is highly expressed in placenta, lung and liver, less in kidney and pancreas, low in brain and skeletal muscle. Isoform LAMP-2B is detected in spleen, thymus, prostate, testis, small intestine, colon, skeletal muscle, brain, placenta, lung, kidney, ovary and pancreas and liver. Isoform LAMP-2C is detected in small intestine, colon, heart, brain, skeletal muscle, and at lower levels in kidney and placenta.

Its subcellular location is the lysosome membrane. It localises to the endosome membrane. The protein resides in the cell membrane. The protein localises to the cytoplasmic vesicle. It is found in the autophagosome membrane. Lysosomal membrane glycoprotein which plays an important role in lysosome biogenesis, lysosomal pH regulation and autophagy. Acts as an important regulator of lysosomal lumen pH regulation by acting as a direct inhibitor of the proton channel TMEM175, facilitating lysosomal acidification for optimal hydrolase activity. Plays an important role in chaperone-mediated autophagy, a process that mediates lysosomal degradation of proteins in response to various stresses and as part of the normal turnover of proteins with a long biological half-live. Functions by binding target proteins, such as GAPDH, NLRP3 and MLLT11, and targeting them for lysosomal degradation. In the chaperone-mediated autophagy, acts downstream of chaperones, such as HSPA8/HSC70, which recognize and bind substrate proteins and mediate their recruitment to lysosomes, where target proteins bind LAMP2. Plays a role in lysosomal protein degradation in response to starvation. Required for the fusion of autophagosomes with lysosomes during autophagy. Cells that lack LAMP2 express normal levels of VAMP8, but fail to accumulate STX17 on autophagosomes, which is the most likely explanation for the lack of fusion between autophagosomes and lysosomes. Required for normal degradation of the contents of autophagosomes. Required for efficient MHC class II-mediated presentation of exogenous antigens via its function in lysosomal protein degradation; antigenic peptides generated by proteases in the endosomal/lysosomal compartment are captured by nascent MHC II subunits. Is not required for efficient MHC class II-mediated presentation of endogenous antigens. Functionally, modulates chaperone-mediated autophagy. Decreases presentation of endogenous antigens by MHCII. Does not play a role in the presentation of exogenous and membrane-derived antigens by MHCII. In terms of biological role, (Microbial infection) Supports the FURIN-mediated cleavage of mumps virus fusion protein F by interacting with both FURIN and the unprocessed form but not the processed form of the viral protein F. This chain is Lysosome-associated membrane glycoprotein 2 (LAMP2), found in Homo sapiens (Human).